The primary structure comprises 353 residues: Outer membrane protein P5 (353 aa).

The N-terminal stretch at 1–21 (MKKTAIALVVAGLAAASVAQA) is a signal peptide. 8 consecutive transmembrane segments (beta stranded) span residues 27–37 (TFYAGVKAGQA), 58–69 (SFTYGVFGGYQI), 77–85 (LAVELGYDD), 104–115 (HGAHLSLKGSYE), 120–128 (LDVYGKAGV), 158–167 (GLFAVGAEYA), 172–179 (LAVRLEYQ), and 205–213 (SINAGISYR). Residues 227-353 (VVSKTFSLNS…RVEIAVNGTK (127 aa)) enclose the OmpA-like domain. A disulfide bridge connects residues Cys326 and Cys338.

This sequence belongs to the outer membrane OOP (TC 1.B.6) superfamily. OmpA family. As to quaternary structure, monomer and homodimer.

The protein localises to the cell outer membrane. In terms of biological role, with TolR probably plays a role in maintaining the position of the peptidoglycan cell wall in the periplasm. Acts as a porin with low permeability that allows slow penetration of small solutes; an internal gate slows down solute passage. In Haemophilus influenzae, this protein is Outer membrane protein P5.